The sequence spans 101 residues: Small ribosomal subunit protein uS17 (101 aa).

The protein belongs to the universal ribosomal protein uS17 family. Part of the 30S ribosomal subunit.

One of the primary rRNA binding proteins, it binds specifically to the 5'-end of 16S ribosomal RNA. This Kosmotoga olearia (strain ATCC BAA-1733 / DSM 21960 / TBF 19.5.1) protein is Small ribosomal subunit protein uS17.